The chain runs to 130 residues: Protein ApaG (130 aa).

An ApaG domain is found at 3 to 127 (RAVTRQIEVL…FSLDSPDIRR (125 aa)).

This is Protein ApaG from Afipia carboxidovorans (strain ATCC 49405 / DSM 1227 / KCTC 32145 / OM5) (Oligotropha carboxidovorans).